A 589-amino-acid chain; its full sequence is Complement component C8 beta chain (589 aa).

The first 31 residues, 1–31, serve as a signal peptide directing secretion; it reads MKIGAQVWRALAKSCLLCATLGCLHFPGSRG. The propeptide occupies 32–53; the sequence is GKPDFFETKAVNGSLVKSRPVR. N43 carries N-linked (GlcNAc...) asparagine glycosylation. Residues 63–116 form the TSP type-1 1 domain; it reads DCELSTWSSWTACDPCQKKRYRHTYLLRPSQFYGELCDLSDKEVEDCVTNQPCR. 7 cysteine pairs are disulfide-bonded: C64–C99, C75–C109, C78–C115, C121–C132, C126–C145, C139–C154, and C161–C199. C-linked (Man) tryptophan glycosylation is found at W69 and W72. The 36-residue stretch at 120-155 folds into the LDL-receptor class A domain; the sequence is RCEGFVCAQTGRCVNRRLLCNGDNDCGDQSDEANCR. The Ca(2+) site is built by L137, N140, D142, D144, D150, and E151. The region spanning 157–503 is the MACPF domain; that stretch reads IYKNCQREME…EFQSEVSSCR (347 aa). Beta stranded transmembrane passes span 201–206, 209–213, 251–258, 261–268, 328–335, 338–343, 378–385, and 391–398; these read PHYILD, FRKPY, FNFTSGFK, GVMDLGIK, SYGEYRDL, DFGTHF, AGGSFGIG, and VYVKVGVS. C377 and C402 form a disulfide bridge. The 131-residue stretch at 404-534 folds into the EGF-like domain; that stretch reads DIMKEINERN…PGGFQGTACE (131 aa). Position 417 is a phosphothreonine (T417). 4 disulfides stabilise this stretch: C502/C549, C504/C520, C507/C522, and C524/C533. One can recognise a TSP type-1 2 domain in the interval 544–587; it reads DGKWSCWSDWSACSGGHKTRHRQCNNPAPHKGGSPCSGPASETL. C-linked (Man) tryptophan glycosylation is found at W550 and W553. A disulfide bridge connects residues C556 and C589. The disordered stretch occupies residues 570–589; the sequence is PAPHKGGSPCSGPASETLNC.

It belongs to the complement C6/C7/C8/C9 family. In terms of assembly, heterotrimer of 3 chains: alpha (C8A), beta (C8B) and gamma (C8G); the alpha and gamma chains are disulfide bonded. Component of the membrane attack complex (MAC), composed of complement C5b, C6, C7, C8A, C8B, C8G and multiple copies of the pore-forming subunit C9. Post-translationally, N-glycosylated; contains one or two bound glycans. Not O-glycosylated.

Its subcellular location is the secreted. It localises to the target cell membrane. Membrane attack complex (MAC) assembly is inhibited by CD59, thereby protecting self-cells from damage during complement activation. CD59 acts by binding to the beta-haipins of C8 (C8A and C8B), forming an intermolecular beta-sheet that prevents incorporation of the multiple copies of C9 required for complete formation of the osmolytic pore. MAC assembly is also inhibited by clusterin (CLU) chaperones that inhibit polymerization of C9. In terms of biological role, component of the membrane attack complex (MAC), a multiprotein complex activated by the complement cascade, which inserts into a target cell membrane and forms a pore, leading to target cell membrane rupture and cell lysis. The MAC is initiated by proteolytic cleavage of C5 into complement C5b in response to the classical, alternative, lectin and GZMK complement pathways. The complement pathways consist in a cascade of proteins that leads to phagocytosis and breakdown of pathogens and signaling that strengthens the adaptive immune system. C8B, together with C8A and C8G, inserts into the target membrane, but does not form pores by itself. During MAC assembly, associates with C5b, C6 and C7 to form the C5b8 intermediate complex that inserts into the target membrane and traverses the bilayer increasing membrane rigidity. The chain is Complement component C8 beta chain (C8b) from Mus musculus (Mouse).